Here is a 210-residue protein sequence, read N- to C-terminus: Cancer/testis antigen 2 (210 aa).

Composition is skewed to gly residues over residues 1–47 (MQAE…GPRG) and 56–66 (PRGGAPRGPHG). Disordered regions lie at residues 1 to 80 (MQAE…PCGA) and 154 to 197 (GLGS…DGCR). Residues 163 to 177 (QKARDLRTPKHKVSE) show a composition bias toward basic and acidic residues.

Belongs to the CTAG/PCC1 family. As to expression, testis and very low level in placenta and in some uterus samples. Observed in 25-50% of tumor samples of melanomas, non-small-cell lung carcinomas, bladder, prostate and head and neck cancers.

In Homo sapiens (Human), this protein is Cancer/testis antigen 2 (CTAG2).